A 723-amino-acid chain; its full sequence is Homeobox protein vnd (723 aa).

4 disordered regions span residues 1 to 115, 224 to 307, 465 to 549, and 703 to 723; these read MTTS…GLAP, AHHG…HHHP, GSSG…RKRR, and HAHA…AWWP. A compositionally biased stretch (basic and acidic residues) spans 10 to 22; it reads TPSKRDRDRERDN. The span at 23 to 36 shows a compositional bias: low complexity; the sequence is SSGLGSAGSLPASP. Residues 37 to 48 show a composition bias toward polar residues; sequence QSAITVSPSSPA. Basic and acidic residues predominate over residues 61 to 92; that stretch reads LERKREREDREDREDRKERQERHERDRDHERF. Residues 97-111 show a composition bias toward low complexity; it reads STASTTVPTNTSSSS. Positions 226–235 are enriched in basic and acidic residues; it reads HGSDLSHHSA. Over residues 237 to 255 the composition is skewed to polar residues; the sequence is ESTSGHRGQGSHTSPSALS. Residues 278–289 show a composition bias toward basic and acidic residues; it reads EADHHSTTEHHA. A compositionally biased stretch (basic residues) spans 298 to 307; sequence HPHHQQHHHP. Low complexity predominate over residues 483 to 493; that stretch reads NNNNNTTNNNN. A compositionally biased stretch (acidic residues) spans 512–528; the sequence is LNEDGIEEDIDDVDDAD. Positions 545-604 form a DNA-binding region, homeobox; sequence KRKRRVLFTKAQTYELERRFRQQRYLSAPEREHLASLIRLTPTQVKIWFQNHRYKTKRAQ. The segment covering 703-716 has biased composition (basic residues); that stretch reads HAHAHGHGHPHAHA.

Belongs to the NK-2 homeobox family. In terms of tissue distribution, expressed in the CNS and midgut.

Its subcellular location is the nucleus. Functionally, probable transcriptional regulator involved in the regulation of the proneural AS-C genes and the neurogenic genes of the enhancer of split complex. Could specifically activate proneural genes in the ventral-most neuroectoderm. The protein is Homeobox protein vnd (vnd) of Drosophila melanogaster (Fruit fly).